Here is a 219-residue protein sequence, read N- to C-terminus: Lipid transferase CIDEB (219 aa).

Residues 33 to 110 (PRQRPFRVCD…VLELGQSWSP (78 aa)) form the CIDE-N domain.

The protein belongs to the CIDE family. As to quaternary structure, interacts with DFFA. Interacts with DFFB; inhibited by DFFB. Interacts with APOB. Interacts with PREB/SEC12; facilitating loading of SCAP-SREBP into COPII vesicles.

It localises to the lipid droplet. Its subcellular location is the endoplasmic reticulum membrane. The protein resides in the golgi apparatus. The protein localises to the cytoplasmic vesicle. It is found in the COPI-coated vesicle. Functionally, lipid transferase specifically expressed in hepatocytes, which promotes unilocular lipid droplet formation by mediating lipid droplet fusion. Lipid droplet fusion promotes their enlargement, restricting lipolysis and favoring lipid storage. Localizes on the lipid droplet surface, at focal contact sites between lipid droplets, and mediates atypical lipid droplet fusion by promoting directional net neutral lipid transfer from the smaller to larger lipid droplets. The transfer direction may be driven by the internal pressure difference between the contacting lipid droplet pair. Promotes lipid exchange and lipid droplet fusion in both small and large lipid droplet-containing hepatocytes. In addition to its role in lipid droplet fusion, also involved in cytoplasmic vesicle biogenesis and transport. Required for very-low-density lipoprotein (VLDL) lipidation and maturation. Probably involved in the biogenesis of VLDL transport vesicles by forming a COPII vesicle coat and facilitating the formation of endoplasmic reticulum-derived large vesicles. Also involved in sterol-regulated export of the SCAP-SREBP complex, composed of SCAP, SREBF1/SREBP1 and SREBF2/SREBP2, by promoting loading of SCAP-SREBP into COPII vesicles. May also activate apoptosis. This Bos taurus (Bovine) protein is Lipid transferase CIDEB (CIDEB).